The sequence spans 87 residues: Probable acyl carrier protein PigG (87 aa).

Residues 1–78 form the Carrier domain; that stretch reads MLESKLINHI…SMVALVQRLK (78 aa). An O-(pantetheine 4'-phosphoryl)serine modification is found at Ser-36.

It functions in the pathway antibiotic biosynthesis; prodigiosin biosynthesis. Its function is as follows. Involved in the biosynthesis of 4-methoxy-2,2'-bipyrrole-5-carbaldehyde (MBC), one of the terminal products involved in the biosynthesis of the red antibiotic prodigiosin (Pig). Carrier of the L-prolyl group transferred from L-prolyl-AMP by PigI. This chain is Probable acyl carrier protein PigG, found in Serratia sp. (strain ATCC 39006) (Prodigiosinella confusarubida).